Here is a 424-residue protein sequence, read N- to C-terminus: 5-methylthioadenosine/S-adenosylhomocysteine deaminase (424 aa).

The Zn(2+) site is built by histidine 60 and histidine 62. Substrate contacts are provided by glutamate 89 and histidine 181. Residue histidine 208 coordinates Zn(2+). Glutamate 211 and aspartate 296 together coordinate substrate. Aspartate 296 lines the Zn(2+) pocket.

Belongs to the metallo-dependent hydrolases superfamily. MTA/SAH deaminase family. It depends on Zn(2+) as a cofactor.

The enzyme catalyses S-adenosyl-L-homocysteine + H2O + H(+) = S-inosyl-L-homocysteine + NH4(+). It catalyses the reaction S-methyl-5'-thioadenosine + H2O + H(+) = S-methyl-5'-thioinosine + NH4(+). In terms of biological role, catalyzes the deamination of 5-methylthioadenosine and S-adenosyl-L-homocysteine into 5-methylthioinosine and S-inosyl-L-homocysteine, respectively. Is also able to deaminate adenosine. This chain is 5-methylthioadenosine/S-adenosylhomocysteine deaminase, found in Thermococcus onnurineus (strain NA1).